Reading from the N-terminus, the 349-residue chain is Glycerol-3-phosphate dehydrogenase [NAD(+)], cytoplasmic (349 aa).

NAD(+) is bound at residue 10-15 (GSGNWG). Residue lysine 120 coordinates substrate. Alanine 153 is an NAD(+) binding site. Lysine 204 acts as the Proton acceptor in catalysis. Arginine 269 serves as a coordination point for NAD(+). 269–270 (RN) contacts substrate. An N6-succinyllysine modification is found at lysine 289. NAD(+) is bound by residues lysine 296 and glutamine 298. Tyrosine 326 is subject to Phosphotyrosine.

It belongs to the NAD-dependent glycerol-3-phosphate dehydrogenase family. In terms of assembly, homodimer.

The protein resides in the cytoplasm. The enzyme catalyses sn-glycerol 3-phosphate + NAD(+) = dihydroxyacetone phosphate + NADH + H(+). Functionally, has glycerol-3-phosphate dehydrogenase activity. This chain is Glycerol-3-phosphate dehydrogenase [NAD(+)], cytoplasmic (GPD1), found in Bos taurus (Bovine).